Consider the following 398-residue polypeptide: UPF0496 protein At5g66660 (398 aa).

2 consecutive transmembrane segments (helical) span residues 240-260 (VFFA…TTMS) and 263-283 (PVVC…GKWF).

Belongs to the UPF0496 family.

Its subcellular location is the membrane. This is UPF0496 protein At5g66660 from Arabidopsis thaliana (Mouse-ear cress).